A 445-amino-acid chain; its full sequence is Phosphoglucosamine mutase (445 aa).

Ser101 (phosphoserine intermediate) is an active-site residue. Residues Ser101, Asp240, Asp242, and Asp244 each coordinate Mg(2+). At Ser101 the chain carries Phosphoserine.

The protein belongs to the phosphohexose mutase family. Mg(2+) serves as cofactor. Activated by phosphorylation.

The catalysed reaction is alpha-D-glucosamine 1-phosphate = D-glucosamine 6-phosphate. Catalyzes the conversion of glucosamine-6-phosphate to glucosamine-1-phosphate. This Pseudomonas fluorescens (strain ATCC BAA-477 / NRRL B-23932 / Pf-5) protein is Phosphoglucosamine mutase.